The sequence spans 530 residues: Phosphoenolpyruvate carboxykinase (ATP) (530 aa).

Residues Arg57, Tyr193, and Lys199 each contribute to the substrate site. ATP-binding positions include Lys199, His218, and 234-242; that span reads GLSGTGKTT. Mn(2+) contacts are provided by Lys199 and His218. Asp255 contributes to the Mn(2+) binding site. Glu283, Arg320, and Thr445 together coordinate ATP. Position 320 (Arg320) interacts with substrate.

Belongs to the phosphoenolpyruvate carboxykinase (ATP) family. Mn(2+) serves as cofactor.

It is found in the cytoplasm. The catalysed reaction is oxaloacetate + ATP = phosphoenolpyruvate + ADP + CO2. It participates in carbohydrate biosynthesis; gluconeogenesis. Functionally, involved in the gluconeogenesis. Catalyzes the conversion of oxaloacetate (OAA) to phosphoenolpyruvate (PEP) through direct phosphoryl transfer between the nucleoside triphosphate and OAA. This is Phosphoenolpyruvate carboxykinase (ATP) from Leptospira interrogans serogroup Icterohaemorrhagiae serovar copenhageni (strain Fiocruz L1-130).